A 194-amino-acid chain; its full sequence is Type II methyltransferase M.MjaVI (194 aa).

Belongs to the N(4)/N(6)-methyltransferase family. N(4) subfamily.

The catalysed reaction is a 2'-deoxycytidine in DNA + S-adenosyl-L-methionine = an N(4)-methyl-2'-deoxycytidine in DNA + S-adenosyl-L-homocysteine + H(+). Functionally, a beta subtype methylase that recognizes the double-stranded sequence 5'-CCGG-3', methylates C-1 on both strands, and protects the DNA from cleavage by the MjaVI endonuclease. This Methanocaldococcus jannaschii (strain ATCC 43067 / DSM 2661 / JAL-1 / JCM 10045 / NBRC 100440) (Methanococcus jannaschii) protein is Type II methyltransferase M.MjaVI (mjaVIM).